The following is an 89-amino-acid chain: Small ribosomal subunit protein uS14 (89 aa).

Belongs to the universal ribosomal protein uS14 family. Part of the 30S ribosomal subunit. Contacts proteins S3 and S10.

Functionally, binds 16S rRNA, required for the assembly of 30S particles and may also be responsible for determining the conformation of the 16S rRNA at the A site. In Amoebophilus asiaticus (strain 5a2), this protein is Small ribosomal subunit protein uS14.